We begin with the raw amino-acid sequence, 425 residues long: MFRDSAKIYVKAGNGGNGMVSFHREKYIAAGGPDGGDGGKGGDVIFVVDEGLNTLIDFRYKKNFKAEPGQDGGTSNRSGKNGEDLIIKVPLGTVVKDELTDMVLVDLIKPGQTCVIAKGGRGGKGNQHFATPTRQVPNFAKSGDLGEEYSLILEMKMIADVGLVGYPNVGKSTILSMVSAAKPKIANYHFTTLVPNLGVVQIEHGKSFVIADIPGLIEGAHEGVGLGHQFLRHVERTKLLVHVVDVSGVEGRDAVEDFDTINSELQKYNQVLSTRPQIVAANKMDIPGAEENYKAFKEELEKRGYKVFGISAATNKGLKELLYAVSETLKTLPDTILLDETQNEEVVYKVQEEKPFEIHIEDGVYVIEGKWLRKVLGSTNITNYESLQYFQRALKKKGVITALEEMGIQEGDTVRIYDTEFDYTR.

The region spanning 1 to 158 (MFRDSAKIYV…YSLILEMKMI (158 aa)) is the Obg domain. In terms of domain architecture, OBG-type G spans 159 to 330 (ADVGLVGYPN…LLYAVSETLK (172 aa)). GTP is bound by residues 165-172 (GYPNVGKS), 190-194 (FTTLV), 212-215 (DIPG), 282-285 (NKMD), and 311-313 (SAA). Residues Ser172 and Thr192 each contribute to the Mg(2+) site. The OCT domain occupies 348–425 (YKVQEEKPFE…IYDTEFDYTR (78 aa)).

This sequence belongs to the TRAFAC class OBG-HflX-like GTPase superfamily. OBG GTPase family. Monomer. The cofactor is Mg(2+).

Its subcellular location is the cytoplasm. An essential GTPase which binds GTP, GDP and possibly (p)ppGpp with moderate affinity, with high nucleotide exchange rates and a fairly low GTP hydrolysis rate. Plays a role in control of the cell cycle, stress response, ribosome biogenesis and in those bacteria that undergo differentiation, in morphogenesis control. The protein is GTPase Obg of Ruminiclostridium cellulolyticum (strain ATCC 35319 / DSM 5812 / JCM 6584 / H10) (Clostridium cellulolyticum).